The chain runs to 478 residues: MATITCTRFTEEYQLFEELGKGAFSVVRRCVKVLAGQEYAAKIINTKKLSARDHQKLEREARICRLLKHPNIVRLHDSISEEGHHYLIFDLVTGGELFEDIVAREYYSEADASHCIQQILEAVLHCHQMGVVHRDLKPENLLLASKLKGAAVKLADFGLAIEVEGEQQAWFGFAGTPGYLSPEVLRKDPYGKPVDLWACGVILYILLVGYPPFWDEDQHRLYQQIKAGAYDFPSPEWDTVTPEAKDLINKMLTINPSKRITAAEALKHPWISHRSTVASCMHRQETVDCLKKFNARRKLKGAILTTMLATRNFSGGKSGGNKKNDGVKESSESTNTTIEDEDTKVRKQEIIKVTEQLIEAISNGDFESYTKMCDPGMTAFEPEALGNLVEGLDFHRFYFENLWSRNSKPVHTTILNPHIHLMGDESACIAYIRITQYLDAGGIPRTAQSEETRVWHRRDGKWQIVHFHRSGAPSVLPH.

At Tyr13 the chain carries Phosphotyrosine. The Protein kinase domain occupies 13 to 271 (YQLFEELGKG…AAEALKHPWI (259 aa)). ATP contacts are provided by residues 19-27 (LGKGAFSVV) and Lys42. Asp135 acts as the Proton acceptor in catalysis. The residue at position 257 (Ser257) is a Phosphoserine. Phosphothreonine; by autocatalysis is present on Thr286. Residues 290–300 (LKKFNARRKLK) are calmodulin-binding. The tract at residues 310 to 320 (TRNFSGGKSGG) is interaction with BAALC. The segment at 314–341 (SGGKSGGNKKNDGVKESSESTNTTIEDE) is disordered. The segment covering 322–331 (KKNDGVKESS) has biased composition (basic and acidic residues). Phosphoserine is present on residues Ser330, Ser331, and Ser333. Phosphothreonine is present on residues Thr336 and Thr337. At Ser404 the chain carries Phosphoserine.

It belongs to the protein kinase superfamily. CAMK Ser/Thr protein kinase family. CaMK subfamily. There are 4 genes encoding calcium/calmodulin-dependent protein kinase type II chains: CAMK2A, CAMK2B, CAMK2G and CAMK2D. The corresponding proteins assemble into homo- or heteromultimeric holoenzymes composed of 12 subunits with two hexameric rings stacked one on top of the other. Interacts with BAALC. Interacts with MPDZ. Interacts with SYN1. Interacts with CAMK2N2. Interacts with SYNGAP1. Interacts with SYNPO2. Interacts with SHANK3. Interacts with GRIN2B. Interacts with CACNB2. Interacts with LRRC7. Interacts with GRM5. Interacts with DAGLA (via C-terminal); this interaction is enhanced by autophosphorylation of CAMK2A at Thr-286. Interacts with CAMK2N1; this interaction requires CAMK2A activation by Ca(2+). Requires Mg(2+) as cofactor. Post-translationally, autophosphorylation of Thr-286 following activation by Ca(2+)/calmodulin. Phosphorylation of Thr-286 locks the kinase into an activated state. In terms of processing, palmitoylated. Probably palmitoylated by ZDHHC3 and ZDHHC7. In terms of tissue distribution, expressed in brain. Expressed in skeletal muscle.

Its subcellular location is the cytoplasm. The protein resides in the synapse. It localises to the postsynaptic density. The protein localises to the cell projection. It is found in the dendritic spine. Its subcellular location is the dendrite. It catalyses the reaction L-seryl-[protein] + ATP = O-phospho-L-seryl-[protein] + ADP + H(+). The catalysed reaction is L-threonyl-[protein] + ATP = O-phospho-L-threonyl-[protein] + ADP + H(+). With respect to regulation, activated by Ca(2+)/calmodulin. Binding of calmodulin results in conformational change that relieves intrasteric autoinhibition and allows autophosphorylation of Thr-286 which turns the kinase in a constitutively active form and confers to the kinase a Ca(2+)-independent activity. Functionally, calcium/calmodulin-dependent protein kinase that functions autonomously after Ca(2+)/calmodulin-binding and autophosphorylation, and is involved in various processes, such as synaptic plasticity, neurotransmitter release and long-term potentiation. Member of the NMDAR signaling complex in excitatory synapses, it regulates NMDAR-dependent potentiation of the AMPAR and therefore excitatory synaptic transmission. Regulates dendritic spine development. Also regulates the migration of developing neurons. Phosphorylates the transcription factor FOXO3 to activate its transcriptional activity. Phosphorylates the transcription factor ETS1 in response to calcium signaling, thereby decreasing ETS1 affinity for DNA. In response to interferon-gamma (IFN-gamma) stimulation, catalyzes phosphorylation of STAT1, stimulating the JAK-STAT signaling pathway. In response to interferon-beta (IFN-beta) stimulation, stimulates the JAK-STAT signaling pathway. Acts as a negative regulator of 2-arachidonoylglycerol (2-AG)-mediated synaptic signaling via modulation of DAGLA activity. In terms of biological role, has no kinase activity. The chain is Calcium/calmodulin-dependent protein kinase type II subunit alpha (Camk2a) from Mus musculus (Mouse).